A 609-amino-acid chain; its full sequence is UvrABC system protein C (609 aa).

The GIY-YIG domain occupies 16–94; that stretch reads SSAGVYRMYD…IKQYMPRYNV (79 aa). In terms of domain architecture, UVR spans 203–238; sequence QQVIATLVGKMEQAAMDLNYEDAARYRDQISALRRV.

This sequence belongs to the UvrC family. In terms of assembly, interacts with UvrB in an incision complex.

It localises to the cytoplasm. Its function is as follows. The UvrABC repair system catalyzes the recognition and processing of DNA lesions. UvrC both incises the 5' and 3' sides of the lesion. The N-terminal half is responsible for the 3' incision and the C-terminal half is responsible for the 5' incision. In Shewanella loihica (strain ATCC BAA-1088 / PV-4), this protein is UvrABC system protein C.